The sequence spans 723 residues: Catalase-peroxidase (723 aa).

The segment at residues 97–225 is a cross-link (tryptophyl-tyrosyl-methioninium (Trp-Tyr) (with M-251)); the sequence is WHAAGSYRVT…LAAVQMGLIY (129 aa). Histidine 98 acts as the Proton acceptor in catalysis. A cross-link (tryptophyl-tyrosyl-methioninium (Tyr-Met) (with W-97)) is located at residues 225–251; it reads YVNPEGVNGKSDPLATAAQMRETFARM. Histidine 266 is a binding site for heme b.

This sequence belongs to the peroxidase family. Peroxidase/catalase subfamily. In terms of assembly, homodimer or homotetramer. Heme b is required as a cofactor. In terms of processing, formation of the three residue Trp-Tyr-Met cross-link is important for the catalase, but not the peroxidase activity of the enzyme.

The enzyme catalyses H2O2 + AH2 = A + 2 H2O. It carries out the reaction 2 H2O2 = O2 + 2 H2O. Its function is as follows. Bifunctional enzyme with both catalase and broad-spectrum peroxidase activity. Involved in tumorigenesis. The protein is Catalase-peroxidase of Rhizobium radiobacter (Agrobacterium tumefaciens).